Here is a 192-residue protein sequence, read N- to C-terminus: MTPSVPADGARLIYLMGASGSGKDTLLRLLRAELRGDEPVLVAHRYITRDSGDTEDALRLTEDEFGRRAALGCFALRWASHGLQYGIGIEIDAWLSCGAAVIINGSRAHLEQAHSRYPALTAVEVTVDPGQLARRLAGRGRESAEQIAQRLARATQPFPVPLQCQLLRVSNDAAPETAAATLLDIARGKLAA.

The protein belongs to the ribose 1,5-bisphosphokinase family.

The enzyme catalyses alpha-D-ribose 1,5-bisphosphate + ATP = 5-phospho-alpha-D-ribose 1-diphosphate + ADP. Its pathway is metabolic intermediate biosynthesis; 5-phospho-alpha-D-ribose 1-diphosphate biosynthesis; 5-phospho-alpha-D-ribose 1-diphosphate from D-ribose 5-phosphate (route II): step 3/3. Catalyzes the phosphorylation of ribose 1,5-bisphosphate to 5-phospho-D-ribosyl alpha-1-diphosphate (PRPP). This chain is Ribose 1,5-bisphosphate phosphokinase PhnN, found in Achromobacter xylosoxidans (strain A8).